The primary structure comprises 318 residues: Thymidylate synthase (318 aa).

Residues arginine 25 and 180–181 (RR) contribute to the dUMP site. The active-site Nucleophile is cysteine 200. Residues 220 to 223 (RSAD), asparagine 231, and 261 to 263 (HIY) contribute to the dUMP site. Residue aspartate 223 coordinates (6R)-5,10-methylene-5,6,7,8-tetrahydrofolate. Alanine 317 provides a ligand contact to (6R)-5,10-methylene-5,6,7,8-tetrahydrofolate.

The protein belongs to the thymidylate synthase family. Bacterial-type ThyA subfamily. As to quaternary structure, homodimer.

Its subcellular location is the cytoplasm. It catalyses the reaction dUMP + (6R)-5,10-methylene-5,6,7,8-tetrahydrofolate = 7,8-dihydrofolate + dTMP. The protein operates within pyrimidine metabolism; dTTP biosynthesis. Its function is as follows. Catalyzes the reductive methylation of 2'-deoxyuridine-5'-monophosphate (dUMP) to 2'-deoxythymidine-5'-monophosphate (dTMP) while utilizing 5,10-methylenetetrahydrofolate (mTHF) as the methyl donor and reductant in the reaction, yielding dihydrofolate (DHF) as a by-product. This enzymatic reaction provides an intracellular de novo source of dTMP, an essential precursor for DNA biosynthesis. This is Thymidylate synthase from Ligilactobacillus salivarius (strain UCC118) (Lactobacillus salivarius).